A 117-amino-acid chain; its full sequence is Mini-circle uncharacterized 12.9 kDa protein (117 aa).

This chain is Mini-circle uncharacterized 12.9 kDa protein, found in Streptomyces coelicolor (strain ATCC BAA-471 / A3(2) / M145).